We begin with the raw amino-acid sequence, 981 residues long: Anoctamin-3 (981 aa).

A compositionally biased stretch (polar residues) spans 1–28; it reads MVHHSGSIQSFKQQKGMNISKSEITTEA. Disordered regions lie at residues 1–32 and 67–87; these read MVHHSGSIQSFKQQKGMNISKSEITTEASLKP and PTSVTFLSADKPEHVTSEESR. Over 1 to 403 the chain is Cytoplasmic; it reads MVHHSGSIQS…LYFAWLGWYT (403 aa). Residues 76–87 show a composition bias toward basic and acidic residues; it reads DKPEHVTSEESR. A helical membrane pass occupies residues 404-424; sequence GMLIPAAVVGLCVFFYGLVTM. 3 N-linked (GlcNAc...) asparagine glycosylation sites follow: N425, N448, and N455. Topologically, residues 425–469 are extracellular; sequence NESQVSQEICKATEVFMCPLCDKNCSLQRLNDSCIYAKVTYLFDN. Residues 470-490 form a helical membrane-spanning segment; the sequence is GGTVFFAIFMAIWATVFLEFW. Over 491–550 the chain is Cytoplasmic; the sequence is KRRRSILTYTWDLIEWEEEEETLRPQFEAKYYRMEVINPITGKPEPHQPSSDKVTRLLVS. A helical membrane pass occupies residues 551–571; sequence VSGIFFMISLVITAVFAVVVY. At 572–592 the chain is on the extracellular side; that stretch reads RLVVMEQFASFKWNFVKQHWQ. Residues 593 to 613 traverse the membrane as a helical segment; sequence FATSGAAVCINFIIIMLLNLA. The Cytoplasmic segment spans residues 614-640; sequence YEKIAYLLTNLEYPRTESEWENSFALK. Residues 641–661 traverse the membrane as a helical segment; sequence MFLFQFVNLNSSIFYIAFFLG. The Extracellular segment spans residues 662–761; it reads RFVGHPGKYN…MDEYLEMVLQ (100 aa). A helical membrane pass occupies residues 762–782; that stretch reads FGFTTIFVAAFPLAPLLALLN. The Cytoplasmic portion of the chain corresponds to 783 to 810; sequence NIIEIRLDAYKFVTQWRRPLPARATDIG. A helical transmembrane segment spans residues 811 to 831; sequence IWLGILEGIGILAVITNAFVI. Residues 832 to 914 lie on the Extracellular side of the membrane; it reads AITSDYIPRF…QYWHILAARL (83 aa). N866 carries an N-linked (GlcNAc...) asparagine glycan. Residues 915–935 traverse the membrane as a helical segment; the sequence is AFIIVFEHLVFGIKSFIAYLI. Topologically, residues 936 to 981 are cytoplasmic; it reads PDIPKGLRERIRREKYLVQEMMYEAELEHLQQQRRKSGQPIHHEWP.

It belongs to the anoctamin family. As to quaternary structure, interacts with KCNT1/Slack. As to expression, predominantly expressed in neuronal tissues. Expressed in brain.

The protein localises to the cell membrane. The enzyme catalyses a 1,2-diacyl-sn-glycero-3-phosphocholine(in) = a 1,2-diacyl-sn-glycero-3-phosphocholine(out). It carries out the reaction a beta-D-galactosyl-(1&lt;-&gt;1')-N-acylsphing-4-enine(out) = a beta-D-galactosyl-(1&lt;-&gt;1')-N-acylsphing-4-enine(in). Functionally, has calcium-dependent phospholipid scramblase activity; scrambles phosphatidylcholine and galactosylceramide. Does not exhibit calcium-activated chloride channel (CaCC) activity. Seems to act as potassium channel regulator and may inhibit pain signaling; can facilitate KCNT1/Slack channel activity by promoting its full single-channel conductance at very low sodium concentrations and by increasing its sodium sensitivity. The chain is Anoctamin-3 from Mus musculus (Mouse).